We begin with the raw amino-acid sequence, 489 residues long: NADH-quinone oxidoreductase subunit N (489 aa).

14 helical membrane passes run 15 to 35, 44 to 64, 78 to 98, 106 to 126, 131 to 151, 166 to 186, 209 to 229, 244 to 264, 278 to 298, 306 to 326, 333 to 353, 378 to 398, 412 to 432, and 459 to 479; these read APLL…VFFI, GYLA…LWGV, FALT…TMSL, IEQG…ILLA, LIVL…LTGF, LVLG…IFGA, LTLL…KVAL, PTPV…AALV, WLPV…LGAV, MLAY…MVAG, AFLF…AVLI, LAVA…MAGF, GLPW…FFYL, and IALA…VFAL.

Belongs to the complex I subunit 2 family. NDH-1 is composed of 14 different subunits. Subunits NuoA, H, J, K, L, M, N constitute the membrane sector of the complex.

The protein resides in the cell membrane. It carries out the reaction a quinone + NADH + 5 H(+)(in) = a quinol + NAD(+) + 4 H(+)(out). In terms of biological role, NDH-1 shuttles electrons from NADH, via FMN and iron-sulfur (Fe-S) centers, to quinones in the respiratory chain. The immediate electron acceptor for the enzyme in this species is believed to be ubiquinone. Couples the redox reaction to proton translocation (for every two electrons transferred, four hydrogen ions are translocated across the cytoplasmic membrane), and thus conserves the redox energy in a proton gradient. This chain is NADH-quinone oxidoreductase subunit N, found in Chloroflexus aggregans (strain MD-66 / DSM 9485).